The primary structure comprises 127 residues: Large ribosomal subunit protein uL22 (127 aa).

Belongs to the universal ribosomal protein uL22 family. In terms of assembly, part of the 50S ribosomal subunit.

Functionally, this protein binds specifically to 23S rRNA; its binding is stimulated by other ribosomal proteins, e.g. L4, L17, and L20. It is important during the early stages of 50S assembly. It makes multiple contacts with different domains of the 23S rRNA in the assembled 50S subunit and ribosome. In terms of biological role, the globular domain of the protein is located near the polypeptide exit tunnel on the outside of the subunit, while an extended beta-hairpin is found that lines the wall of the exit tunnel in the center of the 70S ribosome. The protein is Large ribosomal subunit protein uL22 of Methylorubrum populi (strain ATCC BAA-705 / NCIMB 13946 / BJ001) (Methylobacterium populi).